The sequence spans 777 residues: Isoamylase (777 aa).

An N-terminal signal peptide occupies residues 1-32 (MDPHAPQRQRSGQRLRALALAALACALSPAHA). 5 residues coordinate Ca(2+): aspartate 162, glutamate 263, threonine 264, asparagine 266, and aspartate 293. Aspartate 410 serves as the catalytic Nucleophile. Cysteine 419 and cysteine 423 are joined by a disulfide. Glutamate 458 (proton donor) is an active-site residue.

Belongs to the glycosyl hydrolase 13 family. As to quaternary structure, monomer. Ca(2+) serves as cofactor.

It carries out the reaction Hydrolysis of (1-&gt;6)-alpha-D-glucosidic branch linkages in glycogen, amylopectin and their beta-limit dextrins.. Its function is as follows. Has a high rate of hydrolysis for glycogen. Does not cleave pullulan. The polypeptide is Isoamylase (iam) (Flavobacterium sp).